We begin with the raw amino-acid sequence, 117 residues long: UPF0102 protein FTF0898c (117 aa).

It belongs to the UPF0102 family.

This Francisella tularensis subsp. tularensis (strain FSC 198) protein is UPF0102 protein FTF0898c.